Reading from the N-terminus, the 445-residue chain is Histidinol dehydrogenase (445 aa).

Residues tyrosine 136, glutamine 200, and asparagine 228 each contribute to the NAD(+) site. Threonine 251, glutamine 273, and histidine 276 together coordinate substrate. Residues glutamine 273 and histidine 276 each coordinate Zn(2+). Active-site proton acceptor residues include glutamate 342 and histidine 343. Residues histidine 343, aspartate 376, glutamate 430, and histidine 435 each contribute to the substrate site. Position 376 (aspartate 376) interacts with Zn(2+). Histidine 435 is a binding site for Zn(2+).

Belongs to the histidinol dehydrogenase family. Zn(2+) is required as a cofactor.

The enzyme catalyses L-histidinol + 2 NAD(+) + H2O = L-histidine + 2 NADH + 3 H(+). It functions in the pathway amino-acid biosynthesis; L-histidine biosynthesis; L-histidine from 5-phospho-alpha-D-ribose 1-diphosphate: step 9/9. In terms of biological role, catalyzes the sequential NAD-dependent oxidations of L-histidinol to L-histidinaldehyde and then to L-histidine. In Mycolicibacterium smegmatis (Mycobacterium smegmatis), this protein is Histidinol dehydrogenase (hisD).